Consider the following 240-residue polypeptide: Nudix hydrolase 3 (240 aa).

The region spanning 50 to 190 is the Nudix hydrolase domain; sequence NSAMSVLIPL…RMKYTLPSFD (141 aa). Positions 89-110 match the Nudix box motif; that stretch reads GRMDPGETTTETALRETFEEIG. Mg(2+) is bound by residues glutamate 104 and glutamate 108.

It belongs to the Nudix hydrolase family. PCD1 subfamily. Mn(2+) serves as cofactor. Mg(2+) is required as a cofactor.

Its function is as follows. Probably mediates the hydrolysis of some nucleoside diphosphate derivatives. The polypeptide is Nudix hydrolase 3 (ndx-3) (Caenorhabditis elegans).